A 75-amino-acid polypeptide reads, in one-letter code: Small ribosomal subunit protein bS18 (75 aa).

This sequence belongs to the bacterial ribosomal protein bS18 family. Part of the 30S ribosomal subunit. Forms a tight heterodimer with protein bS6.

Binds as a heterodimer with protein bS6 to the central domain of the 16S rRNA, where it helps stabilize the platform of the 30S subunit. This is Small ribosomal subunit protein bS18 from Anaplasma marginale (strain St. Maries).